A 133-amino-acid polypeptide reads, in one-letter code: MRHSNSGKKLGRTPSHRKALFRNMAKALLTYGKIRTTETKAKELRRIVEPLITLALRNDLHSRRLAYDVLGSHQLVKRLFDDIGPAFVGVSGGFTRVVKLGLPRKGDNAPLAVIELTHQPAAEAPAEEKKAAE.

It belongs to the bacterial ribosomal protein bL17 family. In terms of assembly, part of the 50S ribosomal subunit. Contacts protein L32.

This is Large ribosomal subunit protein bL17 from Nitratidesulfovibrio vulgaris (strain DSM 19637 / Miyazaki F) (Desulfovibrio vulgaris).